Consider the following 320-residue polypeptide: Phospho-N-acetylmuramoyl-pentapeptide-transferase (320 aa).

9 helical membrane passes run 5-25 (FWAF…VIKF), 51-71 (MGGA…SVAY), 75-95 (IGFV…IIGG), 121-141 (LCAV…ILNI), 143-163 (FIGV…WLVG), 176-196 (GLLT…ALGV), 198-218 (NHII…FLLF), 241-261 (IESI…IFVI), and 300-320 (IDAL…LYMS).

It belongs to the glycosyltransferase 4 family. MraY subfamily. It depends on Mg(2+) as a cofactor.

The protein localises to the cell membrane. The catalysed reaction is UDP-N-acetyl-alpha-D-muramoyl-L-alanyl-gamma-D-glutamyl-L-lysyl-D-alanyl-D-alanine + di-trans,octa-cis-undecaprenyl phosphate = Mur2Ac(oyl-L-Ala-gamma-D-Glu-L-Lys-D-Ala-D-Ala)-di-trans,octa-cis-undecaprenyl diphosphate + UMP. Its pathway is cell wall biogenesis; peptidoglycan biosynthesis. Its function is as follows. Catalyzes the initial step of the lipid cycle reactions in the biosynthesis of the cell wall peptidoglycan: transfers peptidoglycan precursor phospho-MurNAc-pentapeptide from UDP-MurNAc-pentapeptide onto the lipid carrier undecaprenyl phosphate, yielding undecaprenyl-pyrophosphoryl-MurNAc-pentapeptide, known as lipid I. The sequence is that of Phospho-N-acetylmuramoyl-pentapeptide-transferase from Leuconostoc mesenteroides subsp. mesenteroides (strain ATCC 8293 / DSM 20343 / BCRC 11652 / CCM 1803 / JCM 6124 / NCDO 523 / NBRC 100496 / NCIMB 8023 / NCTC 12954 / NRRL B-1118 / 37Y).